A 392-amino-acid chain; its full sequence is DNA-directed RNA polymerase subunit Rpo1C (392 aa).

Belongs to the RNA polymerase beta' chain family. As to quaternary structure, part of the RNA polymerase complex.

The protein localises to the cytoplasm. It catalyses the reaction RNA(n) + a ribonucleoside 5'-triphosphate = RNA(n+1) + diphosphate. DNA-dependent RNA polymerase (RNAP) catalyzes the transcription of DNA into RNA using the four ribonucleoside triphosphates as substrates. Forms part of the jaw domain. The protein is DNA-directed RNA polymerase subunit Rpo1C of Saccharolobus islandicus (strain Y.N.15.51 / Yellowstone #2) (Sulfolobus islandicus).